The primary structure comprises 537 residues: Carboxypeptidase Y homolog A (537 aa).

The first 17 residues, 1–17 (MRLSTSALVLGAASSAV), serve as a signal peptide directing secretion. Residues 18–124 (AFDQKVLGDL…RLDNYNLRAK (107 aa)) constitute a propeptide that is removed on maturation. 5 disulfide bridges follow: cysteine 178/cysteine 418, cysteine 312/cysteine 326, cysteine 336/cysteine 359, cysteine 343/cysteine 352, and cysteine 381/cysteine 388. An N-linked (GlcNAc...) asparagine glycan is attached at asparagine 209. The active site involves serine 265. Residue aspartate 457 is part of the active site. N-linked (GlcNAc...) asparagine glycosylation is present at asparagine 503. Residue histidine 514 is part of the active site.

Belongs to the peptidase S10 family.

It is found in the vacuole. It catalyses the reaction Release of a C-terminal amino acid with broad specificity.. Vacuolar carboxypeptidase involved in degradation of small peptides. Digests preferentially peptides containing an aliphatic or hydrophobic residue in P1' position, as well as methionine, leucine or phenylalanine in P1 position of ester substrate. The polypeptide is Carboxypeptidase Y homolog A (CPYA) (Fusarium vanettenii (strain ATCC MYA-4622 / CBS 123669 / FGSC 9596 / NRRL 45880 / 77-13-4) (Fusarium solani subsp. pisi)).